We begin with the raw amino-acid sequence, 604 residues long: Asparagine synthetase [glutamine-hydrolyzing] 1 (604 aa).

The active-site Nucleophile is C2. The Glutamine amidotransferase type-2 domain occupies 2–186 (CGILAVLGAA…PGHLYSSAAG (185 aa)). L-glutamine-binding positions include 50-54 (RLAIV), 75-77 (NGE), and D99. The Asparagine synthetase domain occupies 211–451 (LREAFEKAVI…LPKHILYRQK (241 aa)). Residues L232, V268, and 342-343 (SG) contribute to the ATP site.

The catalysed reaction is L-aspartate + L-glutamine + ATP + H2O = L-asparagine + L-glutamate + AMP + diphosphate + H(+). Its pathway is amino-acid biosynthesis; L-asparagine biosynthesis. Functionally, essential for nitrogen assimilation, distribution and remobilization within the plant via the phloem. This chain is Asparagine synthetase [glutamine-hydrolyzing] 1, found in Oryza sativa subsp. japonica (Rice).